The chain runs to 354 residues: Decorin (354 aa).

The signal sequence occupies residues 1–16 (MKATLVLFLLAQVSWA). A propeptide spanning residues 17–30 (GPFEQRGLFDFMLE) is cleaved from the precursor. Serine 34 carries O-linked (Xyl...) (glycosaminoglycan) serine glycosylation. Intrachain disulfides connect cysteine 49/cysteine 55 and cysteine 53/cysteine 62. LRR repeat units lie at residues 68–88 (DKVP…NNKI), 89–112 (TEIK…NNKI), 113–136 (SKIS…KNHL), 137–157 (KELP…DNEI), 158–181 (TKLK…GNPL), 182–207 (KNSG…DTNI), 208–228 (TAIP…GNKI), 229–252 (AKVD…FNSI), 253–276 (TVVE…NNKL), 277–299 (LRVP…NNNI), 300–329 (SEVG…SNPV), and 330–354 (RYWQ…GNYK). N-linked (GlcNAc...) asparagine glycosylation occurs at asparagine 206. Asparagine 241, asparagine 257, and asparagine 298 each carry an N-linked (GlcNAc...) asparagine glycan. Residues cysteine 308 and cysteine 341 are joined by a disulfide bond.

The protein belongs to the small leucine-rich proteoglycan (SLRP) family. SLRP class I subfamily. Binds to type I and type II collagen, fibronectin and TGF-beta. Forms a ternary complex with MFAP2 and ELN. Interacts with DPT. In terms of processing, the attached glycosaminoglycan chain can be either chondroitin sulfate or dermatan sulfate depending upon the tissue of origin.

The protein resides in the secreted. Its subcellular location is the extracellular space. The protein localises to the extracellular matrix. Its function is as follows. May affect the rate of fibrils formation. May be implicated in the dilatation of the rat cervix. The chain is Decorin (Dcn) from Rattus norvegicus (Rat).